A 463-amino-acid chain; its full sequence is General transcription factor IIH subunit 4 (463 aa).

It belongs to the TFB2 family. As to quaternary structure, component of the 7-subunit TFIIH core complex composed of XPB/ERCC3, XPD/ERCC2, GTF2H1, GTF2H2, GTF2H3, GTF2H4 and GTF2H5, which is active in NER. The core complex associates with the 3-subunit CDK-activating kinase (CAK) module composed of CCNH/cyclin H, CDK7 and MNAT1 to form the 10-subunit holoenzyme (holo-TFIIH) active in transcription. Part of TBP-based Pol II pre-initiation complex (PIC), in which Pol II core assembles with general transcription factors and other specific initiation factors including GTF2E1, GTF2E2, GTF2F1, GTF2F2, TCEA1, ERCC2, ERCC3, GTF2H2, GTF2H3, GTF2H4, GTF2H5, GTF2A1, GTF2A2, GTF2B and TBP; this large multi-subunit PIC complex mediates DNA unwinding and targets Pol II core to the transcription start site where the first phosphodiester bond forms.

It localises to the nucleus. Component of the general transcription and DNA repair factor IIH (TFIIH) core complex, which is involved in general and transcription-coupled nucleotide excision repair (NER) of damaged DNA and, when complexed to CAK, in RNA transcription by RNA polymerase II. In NER, TFIIH acts by opening DNA around the lesion to allow the excision of the damaged oligonucleotide and its replacement by a new DNA fragment. In transcription, TFIIH has an essential role in transcription initiation. When the pre-initiation complex (PIC) has been established, TFIIH is required for promoter opening and promoter escape. Phosphorylation of the C-terminal tail (CTD) of the largest subunit of RNA polymerase II by the kinase module CAK controls the initiation of transcription. This chain is General transcription factor IIH subunit 4 (Gtf2h4), found in Mus musculus (Mouse).